A 134-amino-acid polypeptide reads, in one-letter code: NADH-quinone oxidoreductase subunit A 1 (134 aa).

A run of 3 helical transmembrane segments spans residues 10-30, 65-85, and 94-114; these read LIPLAIYTLFAVGLIGILLLA, FYLIAIFFIVFDVEGAFILAW, and IPGLVHITLFITVLLLGLVWL.

It belongs to the complex I subunit 3 family. In terms of assembly, NDH-1 is composed of 14 different subunits. Subunits NuoA, H, J, K, L, M, N constitute the membrane sector of the complex.

Its subcellular location is the cell inner membrane. The catalysed reaction is a quinone + NADH + 5 H(+)(in) = a quinol + NAD(+) + 4 H(+)(out). In terms of biological role, NDH-1 shuttles electrons from NADH, via FMN and iron-sulfur (Fe-S) centers, to quinones in the respiratory chain. The immediate electron acceptor for the enzyme in this species is believed to be ubiquinone. Couples the redox reaction to proton translocation (for every two electrons transferred, four hydrogen ions are translocated across the cytoplasmic membrane), and thus conserves the redox energy in a proton gradient. This chain is NADH-quinone oxidoreductase subunit A 1, found in Citrifermentans bemidjiense (strain ATCC BAA-1014 / DSM 16622 / JCM 12645 / Bem) (Geobacter bemidjiensis).